The primary structure comprises 371 residues: MKASWRQVFAWRMQRQFLEPRTQPSASDVVGRLCGVQAQVWSVAELNVALRQAAPDRESVNREVADLSLMKTWAMRGTLHLLRPSEAGPYLSLMANTGSWLKPSWTRASGVTPRQVDELTEEVAGILDGVVLTRDELVTRLVADKRFVSMEERLRSGWGSVLKPLAWRGVLCHGPNRGNKITFTLPASQFGADWGKMPEPDEAAPTVIKAYLGAYGPATIETFDRWLSLNSTSKPKLRKWFGDMGDELTEVDVEGRKAFVLTEHAEELAATAPCTGIRLLGGFDQYLLGPGTKDEVVLAPEHRSAVSRAAGWISPVVVKDGRVVGVWEIVDQELVVTPFPDTERLPVKAVEKEAAHVARASGVSRLPVRIV.

Positions 37 to 39 (QAQ) match the QXQ; important for activity motif.

The protein belongs to the DNA glycosylase AlkZ-like family.

Its function is as follows. DNA glycosylase involved in the repair of interstrand DNA cross-links (ICLs), which are highly toxic DNA lesions that covalently tether the opposing strands of DNA, thereby inhibiting essential cellular processes such as DNA replication and transcription. Acts by unhooking both sides of the ICLs, forming abasic (AP) sites on both strands. AlkZ specifically repairs DNA damage induced by azinomycin B (AZB), a natural product with potent antibiotic and antitumor activities that interacts covalently with duplex DNA and forms ICLs. AlkZ thus confers self-resistance to azinomycin B, which is produced by S.sahachiroi. It may also protect target sites by protein-DNA interaction. Binds sequence non-specifically to native DNA and structure-specifically to azinomycin B-modified sites, with higher affinity to azinomycin B-modified sites and lower affinity to native DNA duplex. In vitro, also acts on monoadducts and can catalyze the excision of N7-methylguanine (7mGua) from an oligonucleotide containing N7-methyldeoxyguanosine (d7mG). Is a monofunctional DNA glycosylase that does not have lyase activity. The chain is Interstrand DNA cross-link repair glycosylase from Streptomyces sahachiroi.